The primary structure comprises 289 residues: Aquaporin PIP2-3 (289 aa).

Positions 1–25 (MAKQDIEASGPEAGEFSAKDYTDPP) are disordered. A run of 2 helical transmembrane segments spans residues 43-63 (AVIA…ATVI) and 80-100 (CGGV…FILV). Residues 112–114 (NPA) carry the NPA 1 motif. A run of 3 helical transmembrane segments spans residues 131-151 (LLYI…VKGF), 173-193 (GTGL…VFSA), and 207-227 (VLAP…TIPI). Positions 233-235 (NPA) match the NPA 2 motif. A helical membrane pass occupies residues 255–275 (IFWVGPLIGAAIAAAYHQYVL).

Belongs to the MIP/aquaporin (TC 1.A.8) family. PIP (TC 1.A.8.11) subfamily.

Its subcellular location is the cell membrane. Aquaporins facilitate the transport of water and small neutral solutes across cell membranes. This is Aquaporin PIP2-3 (PIP2-3) from Zea mays (Maize).